A 207-amino-acid polypeptide reads, in one-letter code: 3-demethoxyubiquinol 3-hydroxylase (207 aa).

Fe cation contacts are provided by Glu56, Glu86, His89, Glu138, Glu170, and His173.

Belongs to the COQ7 family. Fe cation is required as a cofactor.

The protein resides in the cell membrane. It carries out the reaction a 5-methoxy-2-methyl-3-(all-trans-polyprenyl)benzene-1,4-diol + AH2 + O2 = a 3-demethylubiquinol + A + H2O. Its pathway is cofactor biosynthesis; ubiquinone biosynthesis. In terms of biological role, catalyzes the hydroxylation of 2-nonaprenyl-3-methyl-6-methoxy-1,4-benzoquinol during ubiquinone biosynthesis. The protein is 3-demethoxyubiquinol 3-hydroxylase of Cupriavidus taiwanensis (strain DSM 17343 / BCRC 17206 / CCUG 44338 / CIP 107171 / LMG 19424 / R1) (Ralstonia taiwanensis (strain LMG 19424)).